We begin with the raw amino-acid sequence, 186 residues long: NADH-quinone oxidoreductase subunit B (186 aa).

[4Fe-4S] cluster contacts are provided by cysteine 44, cysteine 45, cysteine 110, and cysteine 139.

The protein belongs to the complex I 20 kDa subunit family. As to quaternary structure, NDH-1 is composed of 14 different subunits. Subunits NuoB, C, D, E, F, and G constitute the peripheral sector of the complex. It depends on [4Fe-4S] cluster as a cofactor.

The protein resides in the cell inner membrane. The catalysed reaction is a quinone + NADH + 5 H(+)(in) = a quinol + NAD(+) + 4 H(+)(out). NDH-1 shuttles electrons from NADH, via FMN and iron-sulfur (Fe-S) centers, to quinones in the respiratory chain. The immediate electron acceptor for the enzyme in this species is believed to be ubiquinone. Couples the redox reaction to proton translocation (for every two electrons transferred, four hydrogen ions are translocated across the cytoplasmic membrane), and thus conserves the redox energy in a proton gradient. The protein is NADH-quinone oxidoreductase subunit B of Leptospira borgpetersenii serovar Hardjo-bovis (strain JB197).